The following is a 123-amino-acid chain: UPF0102 protein Mflv_4140 (123 aa).

This sequence belongs to the UPF0102 family.

In Mycolicibacterium gilvum (strain PYR-GCK) (Mycobacterium gilvum (strain PYR-GCK)), this protein is UPF0102 protein Mflv_4140.